A 359-amino-acid chain; its full sequence is Fructose-bisphosphate aldolase (359 aa).

A D-glyceraldehyde 3-phosphate-binding site is contributed by S61. D109 serves as the catalytic Proton donor. Zn(2+) is bound by residues H110, D144, E174, and H226. G227 is a binding site for dihydroxyacetone phosphate. H265 contacts Zn(2+). Dihydroxyacetone phosphate is bound by residues 266–268 (GGS) and 287–290 (NIDT).

It belongs to the class II fructose-bisphosphate aldolase family. Requires Zn(2+) as cofactor.

It carries out the reaction beta-D-fructose 1,6-bisphosphate = D-glyceraldehyde 3-phosphate + dihydroxyacetone phosphate. Its pathway is carbohydrate degradation; glycolysis; D-glyceraldehyde 3-phosphate and glycerone phosphate from D-glucose: step 4/4. Its function is as follows. Catalyzes the aldol condensation of dihydroxyacetone phosphate (DHAP or glycerone-phosphate) with glyceraldehyde 3-phosphate (G3P) to form fructose 1,6-bisphosphate (FBP) in gluconeogenesis and the reverse reaction in glycolysis. The protein is Fructose-bisphosphate aldolase (fba) of Borreliella burgdorferi (strain ATCC 35210 / DSM 4680 / CIP 102532 / B31) (Borrelia burgdorferi).